Here is a 300-residue protein sequence, read N- to C-terminus: UDP-N-acetylenolpyruvoylglucosamine reductase (300 aa).

Residues 28 to 193 (KTGGPADWLA…LDATFALKLG (166 aa)) form the FAD-binding PCMH-type domain. Arg172 is a catalytic residue. Residue Ser222 is the Proton donor of the active site. Glu292 is a catalytic residue.

It belongs to the MurB family. FAD serves as cofactor.

The protein localises to the cytoplasm. The enzyme catalyses UDP-N-acetyl-alpha-D-muramate + NADP(+) = UDP-N-acetyl-3-O-(1-carboxyvinyl)-alpha-D-glucosamine + NADPH + H(+). Its pathway is cell wall biogenesis; peptidoglycan biosynthesis. Functionally, cell wall formation. This chain is UDP-N-acetylenolpyruvoylglucosamine reductase, found in Limosilactobacillus fermentum (strain NBRC 3956 / LMG 18251) (Lactobacillus fermentum).